The following is a 239-amino-acid chain: 1-(5-phosphoribosyl)-5-[(5-phosphoribosylamino)methylideneamino] imidazole-4-carboxamide isomerase (239 aa).

D8 serves as the catalytic Proton acceptor. D129 (proton donor) is an active-site residue.

Belongs to the HisA/HisF family.

Its subcellular location is the cytoplasm. It carries out the reaction 1-(5-phospho-beta-D-ribosyl)-5-[(5-phospho-beta-D-ribosylamino)methylideneamino]imidazole-4-carboxamide = 5-[(5-phospho-1-deoxy-D-ribulos-1-ylimino)methylamino]-1-(5-phospho-beta-D-ribosyl)imidazole-4-carboxamide. Its pathway is amino-acid biosynthesis; L-histidine biosynthesis; L-histidine from 5-phospho-alpha-D-ribose 1-diphosphate: step 4/9. The protein is 1-(5-phosphoribosyl)-5-[(5-phosphoribosylamino)methylideneamino] imidazole-4-carboxamide isomerase of Bacillus anthracis (strain A0248).